We begin with the raw amino-acid sequence, 258 residues long: UPF0246 protein NTHI1156 (258 aa).

The protein belongs to the UPF0246 family.

This Haemophilus influenzae (strain 86-028NP) protein is UPF0246 protein NTHI1156.